The sequence spans 896 residues: UPF0182 protein GM21_2279 (896 aa).

Helical transmembrane passes span 6 to 26 (MTFI…LLSF), 46 to 66 (VYAQ…FLQL), 99 to 119 (LVRP…GNWG), 158 to 180 (LLKS…AYYV), 201 to 221 (LAVL…LESF), 245 to 265 (TLRI…LGIW), and 271 to 291 (LALG…RVYP).

It belongs to the UPF0182 family.

The protein resides in the cell membrane. The polypeptide is UPF0182 protein GM21_2279 (Geobacter sp. (strain M21)).